The primary structure comprises 337 residues: Ribosomal RNA small subunit methyltransferase H (337 aa).

S-adenosyl-L-methionine contacts are provided by residues 45 to 47 (GGH), Asp-64, His-91, Asp-112, and Gln-119.

This sequence belongs to the methyltransferase superfamily. RsmH family.

The protein localises to the cytoplasm. The catalysed reaction is cytidine(1402) in 16S rRNA + S-adenosyl-L-methionine = N(4)-methylcytidine(1402) in 16S rRNA + S-adenosyl-L-homocysteine + H(+). Functionally, specifically methylates the N4 position of cytidine in position 1402 (C1402) of 16S rRNA. The polypeptide is Ribosomal RNA small subunit methyltransferase H (Cutibacterium acnes (strain DSM 16379 / KPA171202) (Propionibacterium acnes)).